Reading from the N-terminus, the 106-residue chain is Urease subunit beta (106 aa).

It belongs to the urease beta subunit family. Heterotrimer of UreA (gamma), UreB (beta) and UreC (alpha) subunits. Three heterotrimers associate to form the active enzyme.

It localises to the cytoplasm. The enzyme catalyses urea + 2 H2O + H(+) = hydrogencarbonate + 2 NH4(+). It functions in the pathway nitrogen metabolism; urea degradation; CO(2) and NH(3) from urea (urease route): step 1/1. The sequence is that of Urease subunit beta from Synechococcus sp. (strain WH7805).